A 285-amino-acid chain; its full sequence is Shikimate dehydrogenase (NADP(+)) (285 aa).

Shikimate-binding positions include 20–22 and Ser-67; that span reads SIS. Lys-71 (proton acceptor) is an active-site residue. Glu-83 provides a ligand contact to NADP(+). Asn-92 and Asp-107 together coordinate shikimate. NADP(+) contacts are provided by residues 129 to 133 and Met-227; that span reads GAGGA. A shikimate-binding site is contributed by Tyr-229. Gly-250 contributes to the NADP(+) binding site.

Belongs to the shikimate dehydrogenase family. Homodimer.

It carries out the reaction shikimate + NADP(+) = 3-dehydroshikimate + NADPH + H(+). It functions in the pathway metabolic intermediate biosynthesis; chorismate biosynthesis; chorismate from D-erythrose 4-phosphate and phosphoenolpyruvate: step 4/7. In terms of biological role, involved in the biosynthesis of the chorismate, which leads to the biosynthesis of aromatic amino acids. Catalyzes the reversible NADPH linked reduction of 3-dehydroshikimate (DHSA) to yield shikimate (SA). In Streptococcus gordonii (strain Challis / ATCC 35105 / BCRC 15272 / CH1 / DL1 / V288), this protein is Shikimate dehydrogenase (NADP(+)).